The primary structure comprises 440 residues: Stromal membrane-associated protein 1 (440 aa).

In terms of domain architecture, Arf-GAP spans 18-143; that stretch reads QLILSKLLRE…IAITNKEKEK (126 aa). Residues 33 to 56 form a C4-type zinc finger; that stretch reads CADCEAKGPRWASWNIGVFICIRC. Composition is skewed to basic and acidic residues over residues 140 to 158 and 165 to 178; these read EKEK…EKPA and KLPK…EPKK. 2 disordered regions span residues 140–211 and 410–440; these read EKEK…PATA and NASA…QLWK. Positions 192–196 match the Interaction with clathrin heavy chains motif; that stretch reads LLGLD. Residues 420–440 are compositionally biased toward low complexity; it reads STTAGWSGSSSGQTLSTQLWK.

Interacts with ARF6. Interacts with clathrin heavy chains via the clathrin box-like motif. As to expression, detected in adult brain, lung, heart, liver, ovary and bone marrow. Detected in stromal cells of the red pulp of adult spleen.

The protein resides in the cell membrane. GTPase activating protein that acts on ARF6. Plays a role in clathrin-dependent endocytosis. May play a role in erythropoiesis. The polypeptide is Stromal membrane-associated protein 1 (Smap1) (Mus musculus (Mouse)).